The sequence spans 291 residues: Probable S-adenosylmethionine-dependent methyltransferase CRG1 (291 aa).

Belongs to the methyltransferase superfamily.

The protein resides in the cytoplasm. Functionally, probable S-adenosylmethionine-dependent methyltransferase which mediates cantharidin resistance. The protein is Probable S-adenosylmethionine-dependent methyltransferase CRG1 (CRG1) of Saccharomyces cerevisiae (strain ATCC 204508 / S288c) (Baker's yeast).